We begin with the raw amino-acid sequence, 80 residues long: Acyl carrier protein (80 aa).

Residues 4–79 (EAILEKVRSI…DAVKYIEDKQ (76 aa)) form the Carrier domain. Ser-39 is modified (O-(pantetheine 4'-phosphoryl)serine).

Belongs to the acyl carrier protein (ACP) family. 4'-phosphopantetheine is transferred from CoA to a specific serine of apo-ACP by AcpS. This modification is essential for activity because fatty acids are bound in thioester linkage to the sulfhydryl of the prosthetic group.

Its subcellular location is the cytoplasm. The protein operates within lipid metabolism; fatty acid biosynthesis. Carrier of the growing fatty acid chain in fatty acid biosynthesis. This Prochlorococcus marinus (strain SARG / CCMP1375 / SS120) protein is Acyl carrier protein.